Here is a 241-residue protein sequence, read N- to C-terminus: tRNA (guanine-N(7)-)-methyltransferase (241 aa).

Positions 1 to 10 are enriched in polar residues; it reads MTESNDTPIQ. Residues 1-20 are disordered; sequence MTESNDTPIQTEEGDERQHR. The S-adenosyl-L-methionine site is built by E71, E96, D123, and D146. The active site involves D146. Residues K150, D182, and 219 to 222 each bind substrate; that span reads TKFE.

The protein belongs to the class I-like SAM-binding methyltransferase superfamily. TrmB family.

The enzyme catalyses guanosine(46) in tRNA + S-adenosyl-L-methionine = N(7)-methylguanosine(46) in tRNA + S-adenosyl-L-homocysteine. It functions in the pathway tRNA modification; N(7)-methylguanine-tRNA biosynthesis. Catalyzes the formation of N(7)-methylguanine at position 46 (m7G46) in tRNA. The protein is tRNA (guanine-N(7)-)-methyltransferase of Pseudomonas fluorescens (strain Pf0-1).